The following is an 843-amino-acid chain: Protein translocase subunit SecA (843 aa).

Residues Gln-91, 109-113 (GEGKT), and Asp-498 contribute to the ATP site. Residues 796-825 (DFGKAEHVSAEDGKEKAKAEPYVKDEHIGR) are compositionally biased toward basic and acidic residues. The disordered stretch occupies residues 796–833 (DFGKAEHVSAEDGKEKAKAEPYVKDEHIGRNDPCPCGS). Zn(2+) is bound by residues Cys-829, Cys-831, Cys-840, and His-841.

It belongs to the SecA family. Monomer and homodimer. Part of the essential Sec protein translocation apparatus which comprises SecA, SecYEG and auxiliary proteins SecDF. Other proteins may also be involved. Zn(2+) serves as cofactor.

It is found in the cell membrane. The protein resides in the cytoplasm. It carries out the reaction ATP + H2O + cellular proteinSide 1 = ADP + phosphate + cellular proteinSide 2.. Part of the Sec protein translocase complex. Interacts with the SecYEG preprotein conducting channel. Has a central role in coupling the hydrolysis of ATP to the transfer of proteins into and across the cell membrane, serving as an ATP-driven molecular motor driving the stepwise translocation of polypeptide chains across the membrane. This Staphylococcus saprophyticus subsp. saprophyticus (strain ATCC 15305 / DSM 20229 / NCIMB 8711 / NCTC 7292 / S-41) protein is Protein translocase subunit SecA.